The chain runs to 149 residues: MSLQRPNGNSSSSSSHKKHKTEESDEELLMVPDMEAAGSTCVLSSSADDGVNNPELDQTQNGVSTAKRRRGRNPVDKEYRSLKRLLRNRVSAQQARERKKVYVSDLESRANELQNNNDQLEEKISTLTNENTMLRKMLINTRPKTDDNH.

The interval 1–77 (MSLQRPNGNS…RRRGRNPVDK (77 aa)) is disordered. Residues 23 to 36 (ESDEELLMVPDMEA) are interaction with COP1. The residue at position 24 (serine 24) is a Phosphoserine. Positions 55–64 (ELDQTQNGVS) are enriched in polar residues. The bZIP domain occupies 78–141 (EYRSLKRLLR…TMLRKMLINT (64 aa)). The interval 80-100 (RSLKRLLRNRVSAQQARERKK) is basic motif. A leucine-zipper region spans residues 106–134 (LESRANELQNNNDQLEEKISTLTNENTML).

The protein belongs to the bZIP family. Heterodimer; heterodimerizes with HY5 via the leucine-zipper domains. Interacts with COP1 WD40 domain. Interacts with BBX24/STO and BBX25/STH. In terms of processing, ubiquitinated by COP1. Ubiquitination takes place in darkness and leads to its subsequent degradation, thereby preventing the activation of photomorphogenesis signals.

The protein resides in the nucleus. In terms of biological role, transcription factor that promotes photomorphogenesis in light. Acts downstream of the light receptor network and directly affects transcription of light-induced genes. Specifically involved in the blue light specific pathway, suggesting that it participates in transmission of cryptochromes (CRY1 and CRY2) signals to downstream responses. In darkness, its degradation prevents the activation of light-induced genes. In Arabidopsis thaliana (Mouse-ear cress), this protein is Transcription factor HY5-like (HYH).